A 253-amino-acid polypeptide reads, in one-letter code: Phosphate import ATP-binding protein PstB 3 (253 aa).

An ABC transporter domain is found at 8–248; sequence LVINNLDLYY…PQDERTENYI (241 aa). 40 to 47 contacts ATP; sequence GPSGCGKS.

It belongs to the ABC transporter superfamily. Phosphate importer (TC 3.A.1.7) family. As to quaternary structure, the complex is composed of two ATP-binding proteins (PstB), two transmembrane proteins (PstC and PstA) and a solute-binding protein (PstS).

It localises to the cell membrane. The catalysed reaction is phosphate(out) + ATP + H2O = ADP + 2 phosphate(in) + H(+). Functionally, part of the ABC transporter complex PstSACB involved in phosphate import. Responsible for energy coupling to the transport system. This is Phosphate import ATP-binding protein PstB 3 from Streptococcus agalactiae serotype III (strain NEM316).